The chain runs to 65 residues: Hirudin-3A' (65 aa).

Residues V1–Y3 form an interaction with thrombin active site region. 3 disulfides stabilise this stretch: C6/C14, C16/C28, and C22/C39. Positions S32–Q65 are disordered. An O-linked (GalNAc...) threonine glycan is attached at T45. Residues D55–Q65 are interaction with fibrinogen-binding exosite of thrombin. A compositionally biased stretch (acidic residues) spans D55–Q65. Y63 carries the post-translational modification Sulfotyrosine.

The protein belongs to the protease inhibitor I14 (hirudin) family.

It localises to the secreted. In terms of biological role, hirudin is a potent thrombin-specific protease inhibitor. It forms a stable non-covalent complex with alpha-thrombin, thereby abolishing its ability to cleave fibrinogen. In Hirudo medicinalis (Medicinal leech), this protein is Hirudin-3A'.